Here is a 402-residue protein sequence, read N- to C-terminus: Argininosuccinate synthase (402 aa).

Residues 10 to 18 and Ala-38 each bind ATP; that span reads AYSGGLDTS. Tyr-90 lines the L-citrulline pocket. Gly-120 serves as a coordination point for ATP. L-aspartate-binding residues include Thr-122, Asn-126, and Asp-127. Asn-126 provides a ligand contact to L-citrulline. 5 residues coordinate L-citrulline: Arg-130, Ser-179, Ser-188, Glu-264, and Tyr-276.

This sequence belongs to the argininosuccinate synthase family. Type 1 subfamily. As to quaternary structure, homotetramer.

Its subcellular location is the cytoplasm. The catalysed reaction is L-citrulline + L-aspartate + ATP = 2-(N(omega)-L-arginino)succinate + AMP + diphosphate + H(+). Its pathway is amino-acid biosynthesis; L-arginine biosynthesis; L-arginine from L-ornithine and carbamoyl phosphate: step 2/3. In Psychromonas ingrahamii (strain DSM 17664 / CCUG 51855 / 37), this protein is Argininosuccinate synthase.